A 148-amino-acid chain; its full sequence is Putative nickel-responsive regulator (148 aa).

4 residues coordinate Ni(2+): H88, H99, H101, and C107.

This sequence belongs to the transcriptional regulatory CopG/NikR family. Requires Ni(2+) as cofactor.

Its function is as follows. Transcriptional regulator. This chain is Putative nickel-responsive regulator, found in Helicobacter pylori (strain Shi470).